A 362-amino-acid polypeptide reads, in one-letter code: UPF0283 membrane protein Arad_2632 (362 aa).

Residues 1 to 11 (MTKPTEDDPKG) are compositionally biased toward basic and acidic residues. The disordered stretch occupies residues 1–47 (MTKPTEDDPKGISRRPAAFSLEQEASREGAHTKTTAETPRRKPQSFD). The next 2 helical transmembrane spans lie at 82–102 (FSFGKVALSAFGILVSLAFGL) and 118–138 (LGYTALTVLAIGILAVLAIVV).

The protein belongs to the UPF0283 family.

The protein localises to the cell inner membrane. The polypeptide is UPF0283 membrane protein Arad_2632 (Rhizobium rhizogenes (strain K84 / ATCC BAA-868) (Agrobacterium radiobacter)).